Consider the following 401-residue polypeptide: Propionate kinase (401 aa).

ATP is bound by residues Asn-11 and Lys-18. Asn-11 is a Mg(2+) binding site. A substrate-binding site is contributed by Arg-86. Asp-143 functions as the Proton donor/acceptor in the catalytic mechanism. ATP contacts are provided by residues His-175, 203-207, 278-280, and 326-330; these read HLGNG, DLR, and GIGEN.

The protein belongs to the acetokinase family. TdcD subfamily. As to quaternary structure, homodimer. Requires Mg(2+) as cofactor.

It carries out the reaction propanoate + ATP = propanoyl phosphate + ADP. Its pathway is amino-acid degradation; L-threonine degradation via propanoate pathway; propanoate from L-threonine: step 4/4. Catalyzes the conversion of propionyl phosphate and ADP to propionate and ATP. This Klebsiella pneumoniae (strain 342) protein is Propionate kinase.